The following is a 295-amino-acid chain: Small ribosomal subunit protein uS2 (295 aa).

Positions 264 to 295 (KFSKTKNIDEETNTEFEQALNDTDENKNADNA) are disordered.

The protein belongs to the universal ribosomal protein uS2 family.

The chain is Small ribosomal subunit protein uS2 from Rickettsia akari (strain Hartford).